A 292-amino-acid polypeptide reads, in one-letter code: 4-hydroxy-tetrahydrodipicolinate synthase (292 aa).

T45 is a binding site for pyruvate. Y133 functions as the Proton donor/acceptor in the catalytic mechanism. K161 acts as the Schiff-base intermediate with substrate in catalysis. Residue I203 coordinates pyruvate.

Belongs to the DapA family. Homodimer.

Its subcellular location is the cytoplasm. The catalysed reaction is L-aspartate 4-semialdehyde + pyruvate = (2S,4S)-4-hydroxy-2,3,4,5-tetrahydrodipicolinate + H2O + H(+). It functions in the pathway amino-acid biosynthesis; L-lysine biosynthesis via DAP pathway; (S)-tetrahydrodipicolinate from L-aspartate: step 3/4. Functionally, catalyzes the condensation of (S)-aspartate-beta-semialdehyde [(S)-ASA] and pyruvate to 4-hydroxy-tetrahydrodipicolinate (HTPA). In Pseudomonas aeruginosa (strain ATCC 15692 / DSM 22644 / CIP 104116 / JCM 14847 / LMG 12228 / 1C / PRS 101 / PAO1), this protein is 4-hydroxy-tetrahydrodipicolinate synthase.